The sequence spans 303 residues: NAD kinase (303 aa).

Residue D85 is the Proton acceptor of the active site. NAD(+) contacts are provided by residues 85–86, R90, 159–160, K187, D189, A224, and Q259; these read DG and ND.

The protein belongs to the NAD kinase family. A divalent metal cation is required as a cofactor.

The protein resides in the cytoplasm. The enzyme catalyses NAD(+) + ATP = ADP + NADP(+) + H(+). Its function is as follows. Involved in the regulation of the intracellular balance of NAD and NADP, and is a key enzyme in the biosynthesis of NADP. Catalyzes specifically the phosphorylation on 2'-hydroxyl of the adenosine moiety of NAD to yield NADP. The polypeptide is NAD kinase (Bdellovibrio bacteriovorus (strain ATCC 15356 / DSM 50701 / NCIMB 9529 / HD100)).